The sequence spans 328 residues: Fructosamine deglycase FrlB (328 aa).

2 consecutive SIS domains span residues 15 to 153 (FLQD…VLEN) and 181 to 311 (NAKQ…ELAE).

As to quaternary structure, homooctamer.

Catalyzes the conversion of a range of fructosamine 6-phosphates to glucose 6-phosphate and a free amino acid. The protein is Fructosamine deglycase FrlB (frlB) of Bacillus subtilis (strain 168).